The chain runs to 425 residues: uncharacterized protein (425 aa).

This is an uncharacterized protein from Acidianus sp. F28 (AFV-2).